A 591-amino-acid chain; its full sequence is Pentatricopeptide repeat-containing protein At2g35130 (591 aa).

PPR repeat units lie at residues 154-188 (DVIC…RYVP), 189-223 (TEDT…HVSP), 227-262 (GVTV…RCKP), 263-297 (TTET…QCKP), 298-332 (NICT…GLEP), 333-367 (DVYV…GCEP), 368-402 (DRAS…GIAP), 403-437 (TMKS…GVEP), 438-472 (DTFV…PCTA), 473-507 (DIST…NFRP), 508-542 (DVVT…GCAP), and 543-573 (DGGT…MHKG).

It belongs to the PPR family. P subfamily.

The protein is Pentatricopeptide repeat-containing protein At2g35130 of Arabidopsis thaliana (Mouse-ear cress).